Reading from the N-terminus, the 190-residue chain is Protein FAM210B, mitochondrial (190 aa).

The transit peptide at 1 to 58 directs the protein to the mitochondrion; the sequence is MAGLLTLLGPAGRVSTRLRPLAPWLLGTATSCAPPLWALALSHPVPDARLLRTARGDC. Residues 56 to 66 are compositionally biased toward basic and acidic residues; that stretch reads GDCLSRQEPNR. The disordered stretch occupies residues 56–81; the sequence is GDCLSRQEPNRTPEPGGSVTGTEKKL. In terms of domain architecture, DUF1279 spans 78-189; that stretch reads EKKLSRTQQL…VGLFKPPATK (112 aa). 2 helical membrane passes run 97 to 117 and 148 to 168; these read VGVSMHIGISLVSLGIFYTVV and FVVAYAIHKLFAPVRISITLV.

It belongs to the FAM210 family. In terms of tissue distribution, expressed in late erythroblast differentiation stages.

Its subcellular location is the mitochondrion. The protein resides in the mitochondrion outer membrane. Its function is as follows. Plays a role in erythroid differentiation. Involved in cell proliferation and tumor cell growth suppression. Involved in the metabolic reprogramming of cancer cells in a PDK4-dependent manner. The sequence is that of Protein FAM210B, mitochondrial from Mus musculus (Mouse).